A 191-amino-acid chain; its full sequence is Small ribosomal subunit protein eS7 (191 aa).

N-acetylmethionine is present on M1.

It belongs to the eukaryotic ribosomal protein eS7 family.

This Brassica oleracea (Wild cabbage) protein is Small ribosomal subunit protein eS7 (RPS7).